We begin with the raw amino-acid sequence, 166 residues long: Flagellar assembly factor FliW (166 aa).

This sequence belongs to the FliW family. As to quaternary structure, interacts with translational regulator CsrA and flagellin(s).

The protein resides in the cytoplasm. Functionally, acts as an anti-CsrA protein, binds CsrA and prevents it from repressing translation of its target genes, one of which is flagellin. Binds to flagellin and participates in the assembly of the flagellum. The protein is Flagellar assembly factor FliW of Desulfovibrio desulfuricans (strain ATCC 27774 / DSM 6949 / MB).